Consider the following 461-residue polypeptide: Argininosuccinate lyase (461 aa).

This sequence belongs to the lyase 1 family. Argininosuccinate lyase subfamily.

Its subcellular location is the cytoplasm. It carries out the reaction 2-(N(omega)-L-arginino)succinate = fumarate + L-arginine. It functions in the pathway amino-acid biosynthesis; L-arginine biosynthesis; L-arginine from L-ornithine and carbamoyl phosphate: step 3/3. In Dehalococcoides mccartyi (strain ATCC BAA-2100 / JCM 16839 / KCTC 5957 / BAV1), this protein is Argininosuccinate lyase.